Reading from the N-terminus, the 381-residue chain is Alkanesulfonate monooxygenase (381 aa).

Belongs to the SsuD family. Homotetramer.

The catalysed reaction is an alkanesulfonate + FMNH2 + O2 = an aldehyde + FMN + sulfite + H2O + 2 H(+). Catalyzes the desulfonation of aliphatic sulfonates. This chain is Alkanesulfonate monooxygenase, found in Escherichia coli O157:H7.